The chain runs to 843 residues: Protein P (843 aa).

The tract at residues 1 to 177 (MPLSYQHFRK…FCGSPYSWEQ (177 aa)) is terminal protein domain (TP). A spacer region spans residues 178–346 (ELQHGRLVLQ…HCLFHIVNLI (169 aa)). Disordered regions lie at residues 221 to 240 (SRLG…QGGS) and 289 to 315 (VSTS…SRSQ). Low complexity predominate over residues 223-235 (LGPQPTQGQLAGL). A polymerase/reverse transcriptase domain (RT) region spans residues 347 to 690 (DDWGPCAEHG…YLNLYPVARQ (344 aa)). Residues 357 to 600 (EHRIRTPRTP…YSLNFMGYVI (244 aa)) enclose the Reverse transcriptase domain. Mg(2+) contacts are provided by Asp-429, Asp-551, and Asp-552.

This sequence belongs to the hepadnaviridae P protein family.

The enzyme catalyses DNA(n) + a 2'-deoxyribonucleoside 5'-triphosphate = DNA(n+1) + diphosphate. It carries out the reaction Endonucleolytic cleavage to 5'-phosphomonoester.. With respect to regulation, activated by host HSP70 and HSP40 in vitro to be able to bind the epsilon loop of the pgRNA. Because deletion of the RNase H region renders the protein partly chaperone-independent, the chaperones may be needed indirectly to relieve occlusion of the RNA-binding site by this domain. Inhibited by several reverse-transcriptase inhibitors: Lamivudine, Adefovir and Entecavir. In terms of biological role, multifunctional enzyme that converts the viral RNA genome into dsDNA in viral cytoplasmic capsids. This enzyme displays a DNA polymerase activity that can copy either DNA or RNA templates, and a ribonuclease H (RNase H) activity that cleaves the RNA strand of RNA-DNA heteroduplexes in a partially processive 3'- to 5'-endonucleasic mode. Neo-synthesized pregenomic RNA (pgRNA) are encapsidated together with the P protein, and reverse-transcribed inside the nucleocapsid. Initiation of reverse-transcription occurs first by binding the epsilon loop on the pgRNA genome, and is initiated by protein priming, thereby the 5'-end of (-)DNA is covalently linked to P protein. Partial (+)DNA is synthesized from the (-)DNA template and generates the relaxed circular DNA (RC-DNA) genome. After budding and infection, the RC-DNA migrates in the nucleus, and is converted into a plasmid-like covalently closed circular DNA (cccDNA). The activity of P protein does not seem to be necessary for cccDNA generation, and is presumably released from (+)DNA by host nuclear DNA repair machinery. In Homo sapiens (Human), this protein is Protein P.